Reading from the N-terminus, the 461-residue chain is Cysteine--tRNA ligase (461 aa).

Residue cysteine 28 coordinates Zn(2+). The 'HIGH' region signature appears at 30–40 (VTIYDLCHIGH). Positions 209, 234, and 238 each coordinate Zn(2+). The 'KMSKS' region motif lies at 266 to 270 (KMSKS). ATP is bound at residue lysine 269.

It belongs to the class-I aminoacyl-tRNA synthetase family. Monomer. Requires Zn(2+) as cofactor.

The protein localises to the cytoplasm. The catalysed reaction is tRNA(Cys) + L-cysteine + ATP = L-cysteinyl-tRNA(Cys) + AMP + diphosphate. The sequence is that of Cysteine--tRNA ligase from Serratia proteamaculans (strain 568).